We begin with the raw amino-acid sequence, 276 residues long: uncharacterized protein (276 aa).

An N-terminal signal peptide occupies residues 1–25 (MNKKRLLPKASLGALFMLFGTALTA). Cysteine 26 carries the N-palmitoyl cysteine lipid modification. A lipid anchor (S-diacylglycerol cysteine) is attached at cysteine 26.

Belongs to the MG439/MG440 family.

The protein localises to the cell membrane. This is an uncharacterized protein from Mycoplasma pneumoniae (strain ATCC 29342 / M129 / Subtype 1) (Mycoplasmoides pneumoniae).